Reading from the N-terminus, the 92-residue chain is Probable Fe(2+)-trafficking protein (92 aa).

Belongs to the Fe(2+)-trafficking protein family.

Its function is as follows. Could be a mediator in iron transactions between iron acquisition and iron-requiring processes, such as synthesis and/or repair of Fe-S clusters in biosynthetic enzymes. The sequence is that of Probable Fe(2+)-trafficking protein from Shewanella loihica (strain ATCC BAA-1088 / PV-4).